We begin with the raw amino-acid sequence, 299 residues long: 4-diphosphocytidyl-2-C-methyl-D-erythritol kinase (299 aa).

Residue Lys19 is part of the active site. 110-120 (PVASGIGGGSA) serves as a coordination point for ATP. Asp152 is an active-site residue.

The protein belongs to the GHMP kinase family. IspE subfamily.

It catalyses the reaction 4-CDP-2-C-methyl-D-erythritol + ATP = 4-CDP-2-C-methyl-D-erythritol 2-phosphate + ADP + H(+). The protein operates within isoprenoid biosynthesis; isopentenyl diphosphate biosynthesis via DXP pathway; isopentenyl diphosphate from 1-deoxy-D-xylulose 5-phosphate: step 3/6. In terms of biological role, catalyzes the phosphorylation of the position 2 hydroxy group of 4-diphosphocytidyl-2C-methyl-D-erythritol. In Agrobacterium fabrum (strain C58 / ATCC 33970) (Agrobacterium tumefaciens (strain C58)), this protein is 4-diphosphocytidyl-2-C-methyl-D-erythritol kinase.